We begin with the raw amino-acid sequence, 360 residues long: Phospho-N-acetylmuramoyl-pentapeptide-transferase (360 aa).

A run of 10 helical transmembrane segments spans residues 24 to 44, 69 to 89, 92 to 112, 133 to 153, 158 to 178, 199 to 219, 239 to 259, 263 to 283, 288 to 308, and 337 to 357; these read RAVM…PWTI, GTPT…TLLW, WANP…ALGF, MVWQ…LAAN, ILIV…GFLV, GLAT…AYAS, VVIF…FNAY, VFMG…VAVI, FVLV…MLQV, and QVVV…LSTL.

The protein belongs to the glycosyltransferase 4 family. MraY subfamily. The cofactor is Mg(2+).

It localises to the cell inner membrane. It catalyses the reaction UDP-N-acetyl-alpha-D-muramoyl-L-alanyl-gamma-D-glutamyl-meso-2,6-diaminopimeloyl-D-alanyl-D-alanine + di-trans,octa-cis-undecaprenyl phosphate = di-trans,octa-cis-undecaprenyl diphospho-N-acetyl-alpha-D-muramoyl-L-alanyl-D-glutamyl-meso-2,6-diaminopimeloyl-D-alanyl-D-alanine + UMP. The protein operates within cell wall biogenesis; peptidoglycan biosynthesis. Catalyzes the initial step of the lipid cycle reactions in the biosynthesis of the cell wall peptidoglycan: transfers peptidoglycan precursor phospho-MurNAc-pentapeptide from UDP-MurNAc-pentapeptide onto the lipid carrier undecaprenyl phosphate, yielding undecaprenyl-pyrophosphoryl-MurNAc-pentapeptide, known as lipid I. This is Phospho-N-acetylmuramoyl-pentapeptide-transferase from Neisseria meningitidis serogroup C / serotype 2a (strain ATCC 700532 / DSM 15464 / FAM18).